A 323-amino-acid chain; its full sequence is Ubiquinone biosynthesis protein COQ4, mitochondrial (323 aa).

4 residues coordinate Zn(2+): histidine 209, aspartate 210, histidine 213, and glutamate 225.

This sequence belongs to the COQ4 family. As to quaternary structure, component of a multi-subunit COQ enzyme complex, composed of at least COQ3, COQ4, COQ5, COQ6, COQ7 and COQ9. It depends on Zn(2+) as a cofactor.

Its subcellular location is the mitochondrion inner membrane. It catalyses the reaction a 4-hydroxy-3-methoxy-5-(all-trans-polyprenyl)benzoate + H(+) = a 2-methoxy-6-(all-trans-polyprenyl)phenol + CO2. It functions in the pathway cofactor biosynthesis; ubiquinone biosynthesis. Functionally, lyase that catalyzes the C1-decarboxylation of 4-hydroxy-3-methoxy-5-(all-trans-polyprenyl)benzoic acid into 2-methoxy-6-(all-trans-polyprenyl)phenol during ubiquinone biosynthesis. The polypeptide is Ubiquinone biosynthesis protein COQ4, mitochondrial (Debaryomyces hansenii (strain ATCC 36239 / CBS 767 / BCRC 21394 / JCM 1990 / NBRC 0083 / IGC 2968) (Yeast)).